A 182-amino-acid chain; its full sequence is uncharacterized protein (182 aa).

The stretch at 66–133 (QKRKRREIKV…NLEIETNSDS (68 aa)) forms a coiled coil.

This is an uncharacterized protein from Acanthamoeba polyphaga (Amoeba).